We begin with the raw amino-acid sequence, 234 residues long: Chromatin remodeling protein EBS (234 aa).

The region spanning Lys29–Arg144 is the BAH domain. A PHD-type zinc finger spans residues Ala146 to Asp197.

The protein belongs to the SHL1/EBS protein family. Recognizes di- and trimethylated histone H3 at lysine 4 (H3K4me2 and H3K4me3). Interacts with HDA6. Expressed ubiquitously, with higher levels in floral buds.

It is found in the nucleus. Its function is as follows. Chromatin remodeling factor that binds to methylated histone (e.g. H3K4me2/3) to prevent their acetylation (e.g. H3K9K14Ac), likely by recruiting histone deacetylase (HDAC) complexes, and thus regulating the transcription of target genes. Negative regulator in developmental processes in a gibberellic acid- (GA-) dependent manner, such as germination, flowering induction, and flower organ specification, probably by modulating developmental gene expression. Involved in the chromatin-mediated repression of floral initiation and controls genes regulating flowering. Negatively regulates the expression of the floral integrator FT epigenetically, by preventing high levels of H3 acetylation, thus maintaining an inactive chromatin conformation at FT locus. The protein is Chromatin remodeling protein EBS of Arabidopsis thaliana (Mouse-ear cress).